The primary structure comprises 214 residues: Large ribosomal subunit protein uL3 (214 aa).

The interval 136–156 (THGNSLSHRAPGSIGQNQTPG) is disordered. Gln-153 carries the N5-methylglutamine modification.

Belongs to the universal ribosomal protein uL3 family. Part of the 50S ribosomal subunit. Forms a cluster with proteins L14 and L19. In terms of processing, methylated by PrmB.

In terms of biological role, one of the primary rRNA binding proteins, it binds directly near the 3'-end of the 23S rRNA, where it nucleates assembly of the 50S subunit. This is Large ribosomal subunit protein uL3 from Thioalkalivibrio sulfidiphilus (strain HL-EbGR7).